The chain runs to 382 residues: Lipid-A-disaccharide synthase (382 aa).

The protein belongs to the LpxB family.

It catalyses the reaction 2-N,3-O-bis[(3R)-3-hydroxytetradecanoyl]-alpha-D-glucosaminyl 1-phosphate + UDP-2-N,3-O-bis[(3R)-3-hydroxytetradecanoyl]-alpha-D-glucosamine = lipid A disaccharide (E. coli) + UDP + H(+). The enzyme catalyses a lipid X + a UDP-2-N,3-O-bis[(3R)-3-hydroxyacyl]-alpha-D-glucosamine = a lipid A disaccharide + UDP + H(+). Its pathway is glycolipid biosynthesis; lipid IV(A) biosynthesis; lipid IV(A) from (3R)-3-hydroxytetradecanoyl-[acyl-carrier-protein] and UDP-N-acetyl-alpha-D-glucosamine: step 5/6. Its function is as follows. Condensation of UDP-2,3-diacylglucosamine and 2,3-diacylglucosamine-1-phosphate to form lipid A disaccharide, a precursor of lipid A, a phosphorylated glycolipid that anchors the lipopolysaccharide to the outer membrane of the cell. This is Lipid-A-disaccharide synthase from Escherichia coli (strain 55989 / EAEC).